The sequence spans 281 residues: Stomatin-4 (281 aa).

A helical transmembrane segment spans residues 28 to 48 (WIITIISYLVVLFTLPLSAFF).

This sequence belongs to the band 7/mec-2 family.

The protein localises to the membrane. The protein is Stomatin-4 (sto-4) of Caenorhabditis elegans.